We begin with the raw amino-acid sequence, 75 residues long: Insecticidal toxin OcyC10 (75 aa).

The N-terminal stretch at 1-19 is a signal peptide; that stretch reads MNFATKIVILLLVAALILA. Disulfide bonds link Cys-50/Cys-62 and Cys-56/Cys-68.

In terms of tissue distribution, expressed by the venom gland.

It localises to the secreted. Its function is as follows. Insecticidal toxin. The sequence is that of Insecticidal toxin OcyC10 from Opisthacanthus cayaporum (South American scorpion).